The chain runs to 131 residues: uncharacterized protein (131 aa).

Residues 4-44 (QKPEQDVNKKIEELEKKVQELQEQLEKTKQAVKTVASILDN) are a coiled coil.

This is an uncharacterized protein from Sulfolobus islandicus filamentous virus (isolate Iceland/Hveragerdi) (SIFV).